Consider the following 198-residue polypeptide: Recombination protein RecR (198 aa).

The C4-type zinc-finger motif lies at 57–72 (CSVCGHITDKDPCYIC). Positions 80 to 175 (SVLCVVQESK…KVTRIAHGLP (96 aa)) constitute a Toprim domain.

This sequence belongs to the RecR family.

Its function is as follows. May play a role in DNA repair. It seems to be involved in an RecBC-independent recombinational process of DNA repair. It may act with RecF and RecO. The sequence is that of Recombination protein RecR from Listeria innocua serovar 6a (strain ATCC BAA-680 / CLIP 11262).